A 139-amino-acid chain; its full sequence is ATP synthase epsilon chain (139 aa).

The protein belongs to the ATPase epsilon chain family. As to quaternary structure, F-type ATPases have 2 components, CF(1) - the catalytic core - and CF(0) - the membrane proton channel. CF(1) has five subunits: alpha(3), beta(3), gamma(1), delta(1), epsilon(1). CF(0) has three main subunits: a, b and c.

The protein resides in the cell inner membrane. Produces ATP from ADP in the presence of a proton gradient across the membrane. The protein is ATP synthase epsilon chain (atpC) of Escherichia coli O157:H7.